Reading from the N-terminus, the 233-residue chain is 5'-methylthioadenosine/S-adenosylhomocysteine nucleosidase (233 aa).

The active-site Proton acceptor is the Glu12. Substrate contacts are provided by residues Gly78, Ile156, and 177–178; that span reads ME. Asp201 (proton donor) is an active-site residue.

This sequence belongs to the PNP/UDP phosphorylase family. MtnN subfamily.

The catalysed reaction is S-adenosyl-L-homocysteine + H2O = S-(5-deoxy-D-ribos-5-yl)-L-homocysteine + adenine. It catalyses the reaction S-methyl-5'-thioadenosine + H2O = 5-(methylsulfanyl)-D-ribose + adenine. It carries out the reaction 5'-deoxyadenosine + H2O = 5-deoxy-D-ribose + adenine. The protein operates within amino-acid biosynthesis; L-methionine biosynthesis via salvage pathway; S-methyl-5-thio-alpha-D-ribose 1-phosphate from S-methyl-5'-thioadenosine (hydrolase route): step 1/2. Catalyzes the irreversible cleavage of the glycosidic bond in both 5'-methylthioadenosine (MTA) and S-adenosylhomocysteine (SAH/AdoHcy) to adenine and the corresponding thioribose, 5'-methylthioribose and S-ribosylhomocysteine, respectively. Also cleaves 5'-deoxyadenosine, a toxic by-product of radical S-adenosylmethionine (SAM) enzymes, into 5-deoxyribose and adenine. This is 5'-methylthioadenosine/S-adenosylhomocysteine nucleosidase from Listeria monocytogenes serotype 4b (strain CLIP80459).